The chain runs to 924 residues: Hexokinase-3 (924 aa).

The segment at 1–27 (MAAIEPSGLHPGERDSSCPQEGIPRPS) is disordered. 2 Hexokinase domains span residues 27–471 (SGSL…MVTA) and 477–913 (ATHR…LVTR). The hexokinase small subdomain 1 stretch occupies residues 84 to 220 (HGTEQGDFLV…TYNIDVVAMV (137 aa)). 95-102 (ELGATGAS) is an ATP binding site. Residue 95 to 104 (ELGATGASLR) participates in D-glucose 6-phosphate binding. D-glucose is bound by residues Ser168, 185–186 (TK), and 221–222 (ND). The segment at 221–460 (NDTVGTMMGC…CDVSFIPSVD (240 aa)) is hexokinase large subdomain 1. 2 residues coordinate D-glucose 6-phosphate: Asp222 and Thr245. D-glucose contacts are provided by residues Asn248, Glu273, and 304–307 (QRFE). Position 426 to 428 (426 to 428 (GGR)) interacts with D-glucose 6-phosphate. Residues 438–439 (CI) and 542–547 (DLGGTN) each bind ATP. A hexokinase small subdomain 2 region spans residues 531-662 (DGSERGDFLA…AVELNVVAIV (132 aa)). 542–546 (DLGGT) lines the D-glucose 6-phosphate pocket. Residues 610-611 (SF), 627-628 (TK), and 663-664 (ND) each bind D-glucose. Residues 663-902 (NDTVGTMMSC…CTVTFLQSED (240 aa)) form a hexokinase large subdomain 2 region. Residues Asp664 and Thr687 each coordinate D-glucose 6-phosphate. ATP is bound at residue Thr687. Residues 689-690 (TN), Glu715, and Glu749 each bind D-glucose. ATP contacts are provided by residues 754 to 755 (GM), 791 to 795 (TKFLS), and 870 to 874 (TLYKL). D-glucose 6-phosphate is bound by residues 868-870 (DGT) and Ser904.

It belongs to the hexokinase family.

It catalyses the reaction a D-hexose + ATP = a D-hexose 6-phosphate + ADP + H(+). The enzyme catalyses D-fructose + ATP = D-fructose 6-phosphate + ADP + H(+). The catalysed reaction is D-glucose + ATP = D-glucose 6-phosphate + ADP + H(+). Its pathway is carbohydrate metabolism; hexose metabolism. It participates in carbohydrate degradation; glycolysis; D-glyceraldehyde 3-phosphate and glycerone phosphate from D-glucose: step 1/4. Its activity is regulated as follows. Hexokinase is an allosteric enzyme inhibited by its product D-glucose 6-phosphate. Its function is as follows. Catalyzes the phosphorylation of hexose, such as D-glucose and D-fructose, to hexose 6-phosphate (D-glucose 6-phosphate and D-fructose 6-phosphate, respectively). Mediates the initial step of glycolysis by catalyzing phosphorylation of D-glucose to D-glucose 6-phosphate. This Rattus norvegicus (Rat) protein is Hexokinase-3.